The following is a 147-amino-acid chain: MKVILKENLDNLGHIGDIVKVAPGYARNYLLPKGLALEATTKNAKALDHAKKHLEYKKNKVLEQARQFAARIEGIALTLSHQAGEEGKLFGAVTNMELAENLKAQGVEIDRKKIVLAEPIKQVGDFTAIIKIHPEVNATLKVTVTKA.

The protein belongs to the bacterial ribosomal protein bL9 family.

Its function is as follows. Binds to the 23S rRNA. This is Large ribosomal subunit protein bL9 from Geotalea daltonii (strain DSM 22248 / JCM 15807 / FRC-32) (Geobacter daltonii).